The following is a 355-amino-acid chain: UDP-3-O-acylglucosamine N-acyltransferase (355 aa).

Residue histidine 258 is the Proton acceptor of the active site.

Belongs to the transferase hexapeptide repeat family. LpxD subfamily. In terms of assembly, homotrimer.

It catalyses the reaction a UDP-3-O-[(3R)-3-hydroxyacyl]-alpha-D-glucosamine + a (3R)-hydroxyacyl-[ACP] = a UDP-2-N,3-O-bis[(3R)-3-hydroxyacyl]-alpha-D-glucosamine + holo-[ACP] + H(+). The protein operates within bacterial outer membrane biogenesis; LPS lipid A biosynthesis. Its function is as follows. Catalyzes the N-acylation of UDP-3-O-acylglucosamine using 3-hydroxyacyl-ACP as the acyl donor. Is involved in the biosynthesis of lipid A, a phosphorylated glycolipid that anchors the lipopolysaccharide to the outer membrane of the cell. The sequence is that of UDP-3-O-acylglucosamine N-acyltransferase from Agrobacterium fabrum (strain C58 / ATCC 33970) (Agrobacterium tumefaciens (strain C58)).